The following is a 161-amino-acid chain: MRIGLGYDVHKLTEDRKLIIGGVEIPHDKGLLGHSDADVLIHAIMDSILGALALGDIGKHFPDTDEEYKGADSMKLLEHVYNLITSKGYKIGNIDSTIIAQSPKMAPYIESMRSNISKVLNTDIDNINIKATTEEGLGFTGAKQGIASQSICLLLLTSQNN.

A divalent metal cation contacts are provided by D8 and H10. 4-CDP-2-C-methyl-D-erythritol 2-phosphate is bound by residues 8–10 and 34–35; these read DVH and HS. H42 is a binding site for a divalent metal cation. 4-CDP-2-C-methyl-D-erythritol 2-phosphate-binding positions include 56–58, 61–65, 100–106, 132–135, and F139; these read DIG, FPDTD, AQSPKMA, and TTEE.

Belongs to the IspF family. Homotrimer. It depends on a divalent metal cation as a cofactor.

It carries out the reaction 4-CDP-2-C-methyl-D-erythritol 2-phosphate = 2-C-methyl-D-erythritol 2,4-cyclic diphosphate + CMP. It participates in isoprenoid biosynthesis; isopentenyl diphosphate biosynthesis via DXP pathway; isopentenyl diphosphate from 1-deoxy-D-xylulose 5-phosphate: step 4/6. Functionally, involved in the biosynthesis of isopentenyl diphosphate (IPP) and dimethylallyl diphosphate (DMAPP), two major building blocks of isoprenoid compounds. Catalyzes the conversion of 4-diphosphocytidyl-2-C-methyl-D-erythritol 2-phosphate (CDP-ME2P) to 2-C-methyl-D-erythritol 2,4-cyclodiphosphate (ME-CPP) with a corresponding release of cytidine 5-monophosphate (CMP). This is 2-C-methyl-D-erythritol 2,4-cyclodiphosphate synthase from Clostridioides difficile (strain 630) (Peptoclostridium difficile).